The primary structure comprises 321 residues: Lipoyl synthase (321 aa).

7 residues coordinate [4Fe-4S] cluster: C68, C73, C79, C94, C98, C101, and S308. Positions 80–297 constitute a Radical SAM core domain; it reads FNHGTATFMI…KAEAMAMGFT (218 aa).

It belongs to the radical SAM superfamily. Lipoyl synthase family. Requires [4Fe-4S] cluster as cofactor.

It is found in the cytoplasm. It carries out the reaction [[Fe-S] cluster scaffold protein carrying a second [4Fe-4S](2+) cluster] + N(6)-octanoyl-L-lysyl-[protein] + 2 oxidized [2Fe-2S]-[ferredoxin] + 2 S-adenosyl-L-methionine + 4 H(+) = [[Fe-S] cluster scaffold protein] + N(6)-[(R)-dihydrolipoyl]-L-lysyl-[protein] + 4 Fe(3+) + 2 hydrogen sulfide + 2 5'-deoxyadenosine + 2 L-methionine + 2 reduced [2Fe-2S]-[ferredoxin]. The protein operates within protein modification; protein lipoylation via endogenous pathway; protein N(6)-(lipoyl)lysine from octanoyl-[acyl-carrier-protein]: step 2/2. Functionally, catalyzes the radical-mediated insertion of two sulfur atoms into the C-6 and C-8 positions of the octanoyl moiety bound to the lipoyl domains of lipoate-dependent enzymes, thereby converting the octanoylated domains into lipoylated derivatives. This Pectobacterium atrosepticum (strain SCRI 1043 / ATCC BAA-672) (Erwinia carotovora subsp. atroseptica) protein is Lipoyl synthase.